The following is a 179-amino-acid chain: ATP synthase subunit delta (179 aa).

The protein belongs to the ATPase delta chain family. As to quaternary structure, F-type ATPases have 2 components, F(1) - the catalytic core - and F(0) - the membrane proton channel. F(1) has five subunits: alpha(3), beta(3), gamma(1), delta(1), epsilon(1). F(0) has three main subunits: a(1), b(2) and c(10-14). The alpha and beta chains form an alternating ring which encloses part of the gamma chain. F(1) is attached to F(0) by a central stalk formed by the gamma and epsilon chains, while a peripheral stalk is formed by the delta and b chains.

The protein resides in the cell membrane. In terms of biological role, f(1)F(0) ATP synthase produces ATP from ADP in the presence of a proton or sodium gradient. F-type ATPases consist of two structural domains, F(1) containing the extramembraneous catalytic core and F(0) containing the membrane proton channel, linked together by a central stalk and a peripheral stalk. During catalysis, ATP synthesis in the catalytic domain of F(1) is coupled via a rotary mechanism of the central stalk subunits to proton translocation. Its function is as follows. This protein is part of the stalk that links CF(0) to CF(1). It either transmits conformational changes from CF(0) to CF(1) or is implicated in proton conduction. This Bacillus sp. (strain PS3) protein is ATP synthase subunit delta.